Consider the following 44-residue polypeptide: Photosystem I reaction center subunit IX (44 aa).

The chain crosses the membrane as a helical span at residues 7-27 (YLSVAPVASTLWFVALAGLLI).

Belongs to the PsaJ family.

The protein resides in the plastid. It is found in the chloroplast thylakoid membrane. In terms of biological role, may help in the organization of the PsaE and PsaF subunits. The sequence is that of Photosystem I reaction center subunit IX from Cicer arietinum (Chickpea).